The chain runs to 145 residues: Ribosome-binding factor A (145 aa).

Basic and acidic residues predominate over residues Lys122–Arg132. Positions Lys122 to Asp145 are disordered.

It belongs to the RbfA family. Monomer. Binds 30S ribosomal subunits, but not 50S ribosomal subunits or 70S ribosomes.

It localises to the cytoplasm. Functionally, one of several proteins that assist in the late maturation steps of the functional core of the 30S ribosomal subunit. Associates with free 30S ribosomal subunits (but not with 30S subunits that are part of 70S ribosomes or polysomes). Required for efficient processing of 16S rRNA. May interact with the 5'-terminal helix region of 16S rRNA. This is Ribosome-binding factor A from Methylorubrum extorquens (strain PA1) (Methylobacterium extorquens).